Reading from the N-terminus, the 274-residue chain is Remorin 4.2 (274 aa).

Residues 1–30 (MLTLYHQERSPDATSNDRDETPETVVREVH) are compositionally biased toward basic and acidic residues. Disordered stretches follow at residues 1 to 71 (MLTL…EGEN), 117 to 157 (TDHE…TVQR), and 218 to 245 (AMEK…AKRG). 2 stretches are compositionally biased toward polar residues: residues 61–71 (RSATTMSEGEN) and 145–156 (GPGQSRVGSTVQ). Positions 204-239 (MKKIERKLEERKAKAMEKTQNNVAKAQRKAEERRAT) form a coiled coil. A compositionally biased stretch (basic and acidic residues) spans 231-245 (RKAEERRATAEAKRG).

This sequence belongs to the remorin family. In terms of assembly, forms homodimer and heterodimer with REM4.1. Interacts with KIN11. Probably ubiquitinated and degraded by the 26S proteasome pathway. In terms of tissue distribution, predominantly detected in bud, stem, root, flower, silique, and leaves, and enhanced dramatically in senescence leaf.

The protein localises to the cell membrane. Its function is as follows. Collaborates with REM4.1 to positively regulate the BCTV and BSCTV susceptibility. The polypeptide is Remorin 4.2 (Arabidopsis thaliana (Mouse-ear cress)).